We begin with the raw amino-acid sequence, 424 residues long: Protein FAM43A (424 aa).

Over residues 261–297 the composition is skewed to acidic residues; it reads QQEEELQEEEEEHLEDCLEEEEEEDGVGDGDPAEEEA. 2 disordered regions span residues 261 to 299 and 382 to 424; these read QQEEELQEEEEEHLEDCLEEEEEEDGVGDGDPAEEEAEA and LLSG…PYSG. Residues 382-394 are compositionally biased toward low complexity; that stretch reads LLSGESTGSESSI. Residues 405-418 are compositionally biased toward polar residues; sequence SPGNPSGPADSTSL.

This sequence belongs to the FAM43 family.

This Mus musculus (Mouse) protein is Protein FAM43A (Fam43a).